The primary structure comprises 182 residues: Inosine/xanthosine triphosphatase (182 aa).

Aspartate 38 and glutamate 68 together coordinate Mg(2+). 68–69 (EA) is a substrate binding site.

The protein belongs to the YjjX NTPase family. Homodimer. The cofactor is Mg(2+). Requires Mn(2+) as cofactor.

It carries out the reaction XTP + H2O = XDP + phosphate + H(+). The enzyme catalyses ITP + H2O = IDP + phosphate + H(+). Its function is as follows. Phosphatase that hydrolyzes non-canonical purine nucleotides such as XTP and ITP to their respective diphosphate derivatives. Probably excludes non-canonical purines from DNA/RNA precursor pool, thus preventing their incorporation into DNA/RNA and avoiding chromosomal lesions. This is Inosine/xanthosine triphosphatase from Erwinia tasmaniensis (strain DSM 17950 / CFBP 7177 / CIP 109463 / NCPPB 4357 / Et1/99).